A 271-amino-acid polypeptide reads, in one-letter code: Formamidopyrimidine-DNA glycosylase (271 aa).

Residue Pro2 is the Schiff-base intermediate with DNA of the active site. Glu3 functions as the Proton donor in the catalytic mechanism. The active-site Proton donor; for beta-elimination activity is Lys58. Positions 92, 111, and 152 each coordinate DNA. Residues 237–271 (YVYGKVQKPCRICNNIITLIRQNGRSTYFCNACQN) form an FPG-type zinc finger. The active-site Proton donor; for delta-elimination activity is the Arg261.

This sequence belongs to the FPG family. In terms of assembly, monomer. Zn(2+) is required as a cofactor.

It catalyses the reaction Hydrolysis of DNA containing ring-opened 7-methylguanine residues, releasing 2,6-diamino-4-hydroxy-5-(N-methyl)formamidopyrimidine.. The catalysed reaction is 2'-deoxyribonucleotide-(2'-deoxyribose 5'-phosphate)-2'-deoxyribonucleotide-DNA = a 3'-end 2'-deoxyribonucleotide-(2,3-dehydro-2,3-deoxyribose 5'-phosphate)-DNA + a 5'-end 5'-phospho-2'-deoxyribonucleoside-DNA + H(+). In terms of biological role, involved in base excision repair of DNA damaged by oxidation or by mutagenic agents. Acts as a DNA glycosylase that recognizes and removes damaged bases. Has a preference for oxidized purines, such as 7,8-dihydro-8-oxoguanine (8-oxoG). Has AP (apurinic/apyrimidinic) lyase activity and introduces nicks in the DNA strand. Cleaves the DNA backbone by beta-delta elimination to generate a single-strand break at the site of the removed base with both 3'- and 5'-phosphates. This chain is Formamidopyrimidine-DNA glycosylase, found in Wolbachia pipientis subsp. Culex pipiens (strain wPip).